An 83-amino-acid chain; its full sequence is Cell division topological specificity factor (83 aa).

Belongs to the MinE family.

Prevents the cell division inhibition by proteins MinC and MinD at internal division sites while permitting inhibition at polar sites. This ensures cell division at the proper site by restricting the formation of a division septum at the midpoint of the long axis of the cell. The protein is Cell division topological specificity factor of Buchnera aphidicola subsp. Schizaphis graminum (strain Sg).